The chain runs to 438 residues: Glutamine synthetase (438 aa).

Residues 14-98 (EEVEYVDIRF…VHCNVVEPDT (85 aa)) form the GS beta-grasp domain. The region spanning 106-438 (PRIALKAEAY…LAGDVFTKDQ (333 aa)) is the GS catalytic domain. Residues Glu130 and Glu132 each coordinate Mg(2+). An ATP-binding site is contributed by Asp208. Residues Glu213 and Glu220 each coordinate Mg(2+). Residues 264–265 (NG) and Gly265 each bind L-glutamate. His269 contributes to the Mg(2+) binding site. ATP contacts are provided by residues 271–273 (NMS) and Ser273. L-glutamate-binding residues include Arg321, Glu327, and Arg339. The ATP site is built by Arg339, Arg344, and Lys352. Glu357 is a Mg(2+) binding site. Arg359 contributes to the L-glutamate binding site. Tyr397 is subject to O-AMP-tyrosine.

Belongs to the glutamine synthetase family. In terms of assembly, oligomer of 12 subunits arranged in the form of two hexameric ring. It depends on Mg(2+) as a cofactor.

Its subcellular location is the cytoplasm. The enzyme catalyses L-glutamate + NH4(+) + ATP = L-glutamine + ADP + phosphate + H(+). Its activity is regulated as follows. The activity of this enzyme could be controlled by adenylation under conditions of abundant glutamine. Functionally, catalyzes the ATP-dependent biosynthesis of glutamine from glutamate and ammonia. This is Glutamine synthetase from Rhodobacter capsulatus (Rhodopseudomonas capsulata).